The chain runs to 376 residues: Crh-like protein 4 (376 aa).

The first 21 residues, 1-21 (MFPKIFLTAATALLSAKSTFA), serve as a signal peptide directing secretion. One can recognise a GH16 domain in the interval 22 to 229 (QTYSSCNPLF…WARGPTDYSN (208 aa)). C27 and C35 are oxidised to a cystine. The Nucleophile role is filled by E119. The Proton donor role is filled by E123. 4 residues coordinate chitin: E123, K202, W206, and T217. S346 is lipidated: GPI-anchor amidated serine. The propeptide at 347 to 376 (ASPINISRINPLLLCGPFTFFFFAAIRRWP) is removed in mature form. N351 carries an N-linked (GlcNAc...) asparagine glycan.

It belongs to the glycosyl hydrolase 16 family. CRH1 subfamily.

It is found in the cell membrane. It catalyses the reaction Random endo-hydrolysis of N-acetyl-beta-D-glucosaminide (1-&gt;4)-beta-linkages in chitin and chitodextrins.. Functionally, dual chitinase/transglycosylase that plays a role in cell wall architecture. Chitinase and transglycosylase activities are coupled. Required for the polysaccharide cross-linking at the septa and the cell wall. More specifically, transfers chitin to 1,6-beta-glucan in the cell wall. The chain is Crh-like protein 4 from Botryotinia fuckeliana (strain B05.10) (Noble rot fungus).